Here is a 420-residue protein sequence, read N- to C-terminus: Torsin-4A (420 aa).

The helical transmembrane segment at 130–150 (CLLLFIAIVCFQIFNAIENLD) threads the bilayer. 202–209 (GPSGVGKS) provides a ligand contact to ATP.

This sequence belongs to the ClpA/ClpB family. Torsin subfamily.

It is found in the membrane. In Xenopus tropicalis (Western clawed frog), this protein is Torsin-4A (tor4a).